A 750-amino-acid chain; its full sequence is DDT domain-containing protein DDR4 (750 aa).

Positions 1–125 (MGSSSDIVPD…ITSLVPPPEP (125 aa)) are disordered. Over residues 45-54 (RAQQRLQELQ) the composition is skewed to low complexity. Positions 55 to 77 (AAERKLKPPKKEYKREQHRRREE) are enriched in basic and acidic residues. Acidic residues predominate over residues 78 to 100 (VVEEDEDSEDDDQEDEENDGDDE). A DDT domain is found at 133–192 (LRSMWELASVLNFLHVFRPLLKINAEFSAEEFETALLTPNDTLSDIHIPLLKAIPPVTRM). Disordered stretches follow at residues 450 to 505 (NGRS…TDFV) and 532 to 750 (LKKR…TDNS). Polar residues predominate over residues 451-471 (GRSTSSTHPTEPVNDTASGRS). Residues 545 to 585 (EGDEEKGDEEYKWDEDNAEYEEEEEEEEEEDSLSASEEDSD) are compositionally biased toward acidic residues. Positions 595–606 (RRETKLRSRSND) are enriched in basic and acidic residues. Residues 688 to 707 (NADTTNGKENNQLNKSNGTT) show a composition bias toward polar residues. Positions 741 to 750 (LKDDDKTDNS) are enriched in basic and acidic residues.

Interacts (via the DDT domain) with CHR11 (via C-terminus).

It is found in the nucleus. In terms of biological role, probable transcription regulator. This is DDT domain-containing protein DDR4 from Arabidopsis thaliana (Mouse-ear cress).